The sequence spans 503 residues: Probable voltage-gated potassium channel subunit kvs-4 (503 aa).

The Cytoplasmic segment spans residues 1 to 231; the sequence is MNSAIMQGAA…EPASSGKAQA (231 aa). The short motif at 217–219 is the Required for dendritic localization element; sequence WNI. Residues 232 to 252 form a helical membrane-spanning segment; the sequence is FAVCSVVFVLISISGLVLGSL. Over 253–275 the chain is Extracellular; sequence PELQVATKQRNNLTGEEFTEMEP. N264 carries an N-linked (GlcNAc...) asparagine glycan. A helical transmembrane segment spans residues 276–296; the sequence is MPILGYIEYVCIVWFTMEYGL. The Cytoplasmic portion of the chain corresponds to 297–313; the sequence is KMLVSAERSKTFRQLLN. A helical transmembrane segment spans residues 314–334; it reads IIDLLAILPFIIEMLLLIFGI. The Extracellular segment spans residues 335-346; the sequence is STEQLRDLKGAF. Residues 347-366 form a helical; Voltage-sensor membrane-spanning segment; it reads LVIRILRVLRVIRVLKLGRY. The Cytoplasmic portion of the chain corresponds to 367 to 383; the sequence is SSGLQMFGKTLKASFRQ. The tract at residues 368–383 is S4-S5 linker; that stretch reads SGLQMFGKTLKASFRQ. Residues 384-404 form a helical membrane-spanning segment; that stretch reads LGMMAMVVMTGVIFFSTLVYF. Residues 405–417 lie on the Extracellular side of the membrane; that stretch reads LEKDEPASKFHSI. The segment at residues 418–429 is an intramembrane region (helical); the sequence is PAACWWCIVTMT. The stretch at 430 to 434 is an intramembrane region; it reads TVGYG. Positions 430–435 match the Selectivity filter motif; it reads TVGYGD. Residues 435 to 445 lie on the Extracellular side of the membrane; the sequence is DLTPVTVPGKL. Residues 446–466 form a helical membrane-spanning segment; it reads VATGAIACGVLVLALPITIIV. Over 467–503 the chain is Cytoplasmic; the sequence is DNFMKVAETERPAGGNRYRTSQYPKATKSEQMILKVT. Residues 496–500 carry the Required for dendritic localization motif; it reads EQMIL.

It belongs to the potassium channel family. B (Shab) (TC 1.A.1.2) subfamily. Kv2.2/KCNB2 sub-subfamily. As to quaternary structure, homotetramer or heterotetramer. Interacts with unc-101 (via N-terminus); which targets kvs-4 to dendrites. Expressed in the cholinergic motor neuron DA9, mechanosensory neurons ALM and PLM, and the interneuron PVPL.

The protein resides in the cell membrane. It is found in the perikaryon. The protein localises to the cell projection. It localises to the axon. Its subcellular location is the dendrite. Functionally, voltage-gated potassium channel that mediates transmembrane potassium transport in excitable membranes. This chain is Probable voltage-gated potassium channel subunit kvs-4, found in Caenorhabditis elegans.